The chain runs to 137 residues: Large-conductance mechanosensitive channel (137 aa).

3 helical membrane-spanning segments follow: residues 15-35 (IDLAIGVIIGGAFGGLVNSIV), 38-58 (IFMPIIGLITGGIDFSNMFIQ), and 80-100 (GNFITLLINFLIIAWVLFLFV).

The protein belongs to the MscL family. Homopentamer.

It is found in the cell inner membrane. Its function is as follows. Channel that opens in response to stretch forces in the membrane lipid bilayer. May participate in the regulation of osmotic pressure changes within the cell. The chain is Large-conductance mechanosensitive channel from Bartonella henselae (strain ATCC 49882 / DSM 28221 / CCUG 30454 / Houston 1) (Rochalimaea henselae).